Consider the following 628-residue polypeptide: E3 SUMO-protein ligase PIAS3 (628 aa).

Residues 1–200 are interaction with CCAR2; the sequence is MAELGELKHM…QLRFCLCETS (200 aa). The SAP domain occupies 11-45; it reads VMSFRVSELQVLLGFAGRNKSGRKHELLAKALHLL. The LXXLL motif motif lies at 19–23; it reads LQVLL. Glycyl lysine isopeptide (Lys-Gly) (interchain with G-Cter in SUMO2) cross-links involve residues Lys-46, Lys-56, Lys-230, and Lys-307. A PINIT domain is found at 115–280; that stretch reads MHPPLPQPVH…SLSVYLVRQL (166 aa). The segment at 312–393 adopts an SP-RING-type zinc-finger fold; that stretch reads PDSEVATTSL…FMEILNSCSD (82 aa). Residues Cys-343, His-345, Cys-366, and Cys-369 each contribute to the Zn(2+) site. The SUMO1-binding stretch occupies residues 450 to 460; it reads LTIESSSDEED. Residues Lys-466 and Lys-482 each participate in a glycyl lysine isopeptide (Lys-Gly) (interchain with G-Cter in SUMO2) cross-link. The tract at residues 571-628 is disordered; it reads GPLAPTLGSSHRSSTPAPPPGRVSSIVAPGSSLREGHGGPLPSGPSLTGCRSDVISLD.

This sequence belongs to the PIAS family. As to quaternary structure, monomer. Interacts with PLAG1 and ZFHX3. Interacts with STAT5A; the interaction occurs on stimulation by PRL. Binds SUMO1 and UBE2I. Interacts with AR, BCL11A, HMGA2, IRF1 and NCOA2. Interacts with MITF; the interaction inhibits the transcriptional activity of MITF. Interacts with STAT3; the interaction occurs on stimulation by IL6, CNTF or OSM and inhibits the DNA binding activity of STAT3. Interacts with GFI1; the interaction relieves the inhibitory effect of PIAS3 on STAT3-mediated transcriptional activity. Interacts with MTA1. Interacts with CCAR2 (via N-terminus). Interacts with TRIM8. Interacts with PRDM1. Post-translationally, sumoylated. As to expression, expressed in kidney, heart, spleen, brain and cerebellum; weak expression, if any, in liver and lung.

Its subcellular location is the cytoplasm. It is found in the nucleus. The protein localises to the nucleus speckle. It participates in protein modification; protein sumoylation. Functionally, functions as an E3-type small ubiquitin-like modifier (SUMO) ligase, stabilizing the interaction between UBE2I and the substrate, and as a SUMO-tethering factor. Plays a crucial role as a transcriptional coregulation in various cellular pathways, including the STAT pathway and the steroid hormone signaling pathway. Repressor of STAT3 signaling via inhibiting STAT3 DNA-binding and suppressing cell growth. Repressor of MITF transcriptional activity. Enhances the sumoylation of MTA1 and may participate in its paralog-selective sumoylation. Sumoylates CCAR2 which promotes its interaction with SIRT1. Diminishes the sumoylation of ZFHX3 by preventing the colocalization of ZFHX3 with SUMO1 in the nucleus. The polypeptide is E3 SUMO-protein ligase PIAS3 (Pias3) (Mus musculus (Mouse)).